Consider the following 311-residue polypeptide: Acetaldehyde dehydrogenase 1 (311 aa).

NAD(+) is bound at residue 11 to 14 (SGNI). Cys-129 functions as the Acyl-thioester intermediate in the catalytic mechanism. NAD(+) contacts are provided by residues 161–169 (SAGPGTRAN) and Asn-288.

It belongs to the acetaldehyde dehydrogenase family.

The enzyme catalyses acetaldehyde + NAD(+) + CoA = acetyl-CoA + NADH + H(+). This chain is Acetaldehyde dehydrogenase 1, found in Novosphingobium aromaticivorans (strain ATCC 700278 / DSM 12444 / CCUG 56034 / CIP 105152 / NBRC 16084 / F199).